The primary structure comprises 380 residues: Alcohol dehydrogenase (380 aa).

The Zn(2+) site is built by cysteine 48, threonine 50, histidine 70, cysteine 100, cysteine 103, cysteine 106, cysteine 114, and cysteine 178. An alcohol-binding residues include threonine 50 and histidine 70. An NAD(+)-binding site is contributed by threonine 50. NAD(+) is bound by residues glycine 203–glycine 208, aspartate 227, arginine 232, threonine 273, valine 296, valine 296–valine 298, phenylalanine 323, and arginine 373.

Belongs to the zinc-containing alcohol dehydrogenase family. Homodimer. It depends on Zn(2+) as a cofactor.

The protein resides in the cytoplasm. The enzyme catalyses a primary alcohol + NAD(+) = an aldehyde + NADH + H(+). It catalyses the reaction a secondary alcohol + NAD(+) = a ketone + NADH + H(+). The chain is Alcohol dehydrogenase (ADH) from Malus domestica (Apple).